The chain runs to 298 residues: Cyanophycinase (298 aa).

Active-site charge relay system residues include Ser155, Glu173, and His197.

The protein belongs to the peptidase S51 family.

It carries out the reaction [L-4-(L-arginin-2-N-yl)aspartate](n) + H2O = [L-4-(L-arginin-2-N-yl)aspartate](n-1) + L-4-(L-arginin-2-N-yl)aspartate. Exopeptidase that catalyzes the hydrolytic cleavage of multi-L-arginyl-poly-L-aspartic acid (cyanophycin; a water-insoluble reserve polymer) into aspartate-arginine dipeptides. This chain is Cyanophycinase (cphB), found in Trichormus variabilis (strain ATCC 29413 / PCC 7937) (Anabaena variabilis).